A 143-amino-acid chain; its full sequence is Large ribosomal subunit protein uL11 (143 aa).

This sequence belongs to the universal ribosomal protein uL11 family. In terms of assembly, part of the ribosomal stalk of the 50S ribosomal subunit. Interacts with L10 and the large rRNA to form the base of the stalk. L10 forms an elongated spine to which L12 dimers bind in a sequential fashion forming a multimeric L10(L12)X complex. Post-translationally, one or more lysine residues are methylated.

Functionally, forms part of the ribosomal stalk which helps the ribosome interact with GTP-bound translation factors. This chain is Large ribosomal subunit protein uL11, found in Burkholderia ambifaria (strain MC40-6).